We begin with the raw amino-acid sequence, 374 residues long: Dual-specificity RNA methyltransferase RlmN (374 aa).

Residue Glu94 is the Proton acceptor of the active site. Residues 100–339 (EEDRATLCVS…VTIRKTRGDD (240 aa)) enclose the Radical SAM core domain. Cysteines 107 and 344 form a disulfide. [4Fe-4S] cluster-binding residues include Cys114, Cys118, and Cys121. Residues 168–169 (GE), Ser200, 222–224 (SLH), and Asn301 each bind S-adenosyl-L-methionine. Residue Cys344 is the S-methylcysteine intermediate of the active site.

This sequence belongs to the radical SAM superfamily. RlmN family. [4Fe-4S] cluster serves as cofactor.

It localises to the cytoplasm. The catalysed reaction is adenosine(2503) in 23S rRNA + 2 reduced [2Fe-2S]-[ferredoxin] + 2 S-adenosyl-L-methionine = 2-methyladenosine(2503) in 23S rRNA + 5'-deoxyadenosine + L-methionine + 2 oxidized [2Fe-2S]-[ferredoxin] + S-adenosyl-L-homocysteine. It catalyses the reaction adenosine(37) in tRNA + 2 reduced [2Fe-2S]-[ferredoxin] + 2 S-adenosyl-L-methionine = 2-methyladenosine(37) in tRNA + 5'-deoxyadenosine + L-methionine + 2 oxidized [2Fe-2S]-[ferredoxin] + S-adenosyl-L-homocysteine. In terms of biological role, specifically methylates position 2 of adenine 2503 in 23S rRNA and position 2 of adenine 37 in tRNAs. m2A2503 modification seems to play a crucial role in the proofreading step occurring at the peptidyl transferase center and thus would serve to optimize ribosomal fidelity. This Vibrio vulnificus (strain YJ016) protein is Dual-specificity RNA methyltransferase RlmN.